The primary structure comprises 257 residues: Acyl-[acyl-carrier-protein]--UDP-N-acetylglucosamine O-acyltransferase (257 aa).

The protein belongs to the transferase hexapeptide repeat family. LpxA subfamily. Homotrimer.

It localises to the cytoplasm. It catalyses the reaction a (3R)-hydroxyacyl-[ACP] + UDP-N-acetyl-alpha-D-glucosamine = a UDP-3-O-[(3R)-3-hydroxyacyl]-N-acetyl-alpha-D-glucosamine + holo-[ACP]. Its pathway is glycolipid biosynthesis; lipid IV(A) biosynthesis; lipid IV(A) from (3R)-3-hydroxytetradecanoyl-[acyl-carrier-protein] and UDP-N-acetyl-alpha-D-glucosamine: step 1/6. Its function is as follows. Involved in the biosynthesis of lipid A, a phosphorylated glycolipid that anchors the lipopolysaccharide to the outer membrane of the cell. This chain is Acyl-[acyl-carrier-protein]--UDP-N-acetylglucosamine O-acyltransferase, found in Anaeromyxobacter sp. (strain K).